The sequence spans 228 residues: LexA repressor (228 aa).

Positions 26 to 46 form a DNA-binding region, H-T-H motif; it reads FDEMKEALDLRSKSGIHRLIT. Active-site for autocatalytic cleavage activity residues include S149 and K187.

This sequence belongs to the peptidase S24 family. In terms of assembly, homodimer.

The catalysed reaction is Hydrolysis of Ala-|-Gly bond in repressor LexA.. In terms of biological role, represses a number of genes involved in the response to DNA damage (SOS response), including recA and lexA. In the presence of single-stranded DNA, RecA interacts with LexA causing an autocatalytic cleavage which disrupts the DNA-binding part of LexA, leading to derepression of the SOS regulon and eventually DNA repair. In Jannaschia sp. (strain CCS1), this protein is LexA repressor.